The chain runs to 69 residues: Cytochrome c oxidase subunit 8A, mitochondrial (69 aa).

Residues 1–25 (MSVLTSLLLRGLTGSARRLPVPRAK) constitute a mitochondrion transit peptide. Over 26–36 (VHSMPPEEELG) the chain is Mitochondrial matrix. The chain crosses the membrane as a helical span at residues 37 to 60 (IMEKAIGLTFCFVSLFLPAGWILS). The Mitochondrial intermembrane segment spans residues 61-69 (HLEDYKRPE).

The protein belongs to the cytochrome c oxidase VIII family. As to quaternary structure, component of the cytochrome c oxidase (complex IV, CIV), a multisubunit enzyme composed of 14 subunits. The complex is composed of a catalytic core of 3 subunits MT-CO1, MT-CO2 and MT-CO3, encoded in the mitochondrial DNA, and 11 supernumerary subunits COX4I, COX5A, COX5B, COX6A, COX6B, COX6C, COX7A, COX7B, COX7C, COX8 and NDUFA4, which are encoded in the nuclear genome. The complex exists as a monomer or a dimer and forms supercomplexes (SCs) in the inner mitochondrial membrane with NADH-ubiquinone oxidoreductase (complex I, CI) and ubiquinol-cytochrome c oxidoreductase (cytochrome b-c1 complex, complex III, CIII), resulting in different assemblies (supercomplex SCI(1)III(2)IV(1) and megacomplex MCI(2)III(2)IV(2)). In terms of processing, in response to mitochondrial stress, the precursor protein is ubiquitinated by the SIFI complex in the cytoplasm before mitochondrial import, leading to its degradation. Within the SIFI complex, UBR4 initiates ubiquitin chain that are further elongated or branched by KCMF1.

It is found in the mitochondrion inner membrane. The protein operates within energy metabolism; oxidative phosphorylation. Functionally, component of the cytochrome c oxidase, the last enzyme in the mitochondrial electron transport chain which drives oxidative phosphorylation. The respiratory chain contains 3 multisubunit complexes succinate dehydrogenase (complex II, CII), ubiquinol-cytochrome c oxidoreductase (cytochrome b-c1 complex, complex III, CIII) and cytochrome c oxidase (complex IV, CIV), that cooperate to transfer electrons derived from NADH and succinate to molecular oxygen, creating an electrochemical gradient over the inner membrane that drives transmembrane transport and the ATP synthase. Cytochrome c oxidase is the component of the respiratory chain that catalyzes the reduction of oxygen to water. Electrons originating from reduced cytochrome c in the intermembrane space (IMS) are transferred via the dinuclear copper A center (CU(A)) of subunit 2 and heme A of subunit 1 to the active site in subunit 1, a binuclear center (BNC) formed by heme A3 and copper B (CU(B)). The BNC reduces molecular oxygen to 2 water molecules using 4 electrons from cytochrome c in the IMS and 4 protons from the mitochondrial matrix. The polypeptide is Cytochrome c oxidase subunit 8A, mitochondrial (COX8A) (Macaca fascicularis (Crab-eating macaque)).